We begin with the raw amino-acid sequence, 2195 residues long: MNRAKPTTVRRPSAAAKPSGHPPPGDFIALGSKGQASESKTTSTLLKPAPSGLPSERKRDASASLSGTSALTGLTKRPKLSSTPPLSALGRLAEAAVAEKRAISPSIKEPSVVPIEVLPTVLLDEIEAAELEGNDDRIEGVLCGAVKQLKVTRAKPDSTLYLSLMYLAKIKPNIFATEGVIEALCSLLRRDASVNFKAKGNSLVSVLACNLLMAAYEEDENWPEIFVKVYIEDSLGERIWVDSPHCRTFVDNIQTAFNTKMPPKSVLLQGEGARSGGELGAGSSPHPSLTEEEDSQTELLIAEEKLSPEQEGQLMPRPRYDELTESVEEYVLDMLRDQLNRRQPIDNVSRNLLRLLTATCGYKEVRLLAVQRLEMWLQNPKLTRPAQDLLMSVCMNCNSHGSEDMDVISHLIKIRLKPKVLLNHYMLCIRELLNAHKDNLGTTIKFVIFNELSNARNPNNMQILYTVLQHSSELAPKFLAMVFQDLLTNKDDYLRASRALLREIIKQTKHEINFQAFCLGLMQERKEPQYLEMEFKERFVVHITDVLAVSMMLGITAQVKEAGVAWDKGEKRNLEVLRTFQNQIAAIQRDAVWWLHTVVPSVSKLAPKDYVHCLHKVLFTEQPETYYKWDNWPPESDRNFFLRLCSEVPILEDTLMRVLVIGLSRELPLGPADAMELADHLVKRAAAVQADDVEVLKVERIQLIDAVLNLCTYHHPENIQLPPGYQPPNLAISTLYWKAWPLLLVVAAFNPENIGLAAWEEYPTLKMLMEMVMTNNYSYPPCTLTDEETRTEMINRELQISQREKQEILAFEGHLAAASTKQTITESSSLLLSQLTSLDPQGPPRRPPPHILDQVKALNQSLRLGHLLCRSRNPDFLLHIIQRQASSQSMPWLADLVQSSEGSLDVLPVQCLCEFLLHDAADSTASGEEDDEGESREQKAKKRQRQQKQRQLLGRLQDLLLGPKADEQTTCEVLDYFLRRLGSSQVASRVLAMKGLSLVLSEGGLRDKEEKEPPMEEDIGETDALQGYQWLLRDLPRLPLFDSVRTTTALALQQAIHMETDPQTISAYLIYLSQHTPVEEQGPHSDLALDVARLVVERSTIMAHLFSKPSCSTASDAVLSALLSVFSRYVRRMRKSKEGEEVYSWSESQDQVFLRWSSGETATMHILVVHAMVILLTLGPPRSGDSEFSELLDIWFPEKKPLPTAFLVDTSEEALLLPDWLKLRMIRSEVPRLVDAALQDLEPQQLLLFVQSFGIPVSSMSKLLQYLDQAVAQDPQTLEQNIMDKNYMAHLVEVQHERGASGGQTFHSLLTASLPPRRDSTEAPKPESSPEPPPGQGRTRAGTQVPVLGPEDDLAGIFLQIFPLSPDPRWQSSSPRPLALALQQALGQELARVRQGNPEVPGITVRLLQAMTTLLSSPHGGTLALAMHHSHFLSCPLMRQLYQYQRAVPQDTGFSSLFLKVLMQILQWLDSPAVEDGPLQAQLKLFATRYSARHRISDVRSGLLHLADALSFHGDLEVANSTARAVIATLRSGEKCPVEPELISKVLRGLIEVRSPHLEELLTALFSATTETSCPSPASGPIVVVSSLLLQEKEELLGPSKQEVEGASTEAMRLGPASGLLVDWLETLDPEVVCSCPDLQWKLLFSRRKGKGHISAQVLSFRPYLLALLTHQASWSTLHCCIRVLLGKSREQRLDPSASLDFLWACIHVPRIWQGRDQRTPQKRREELVLHVQGPELLSLVELILSEAETRSQDGDSAARTLIQTRLPLLLSCCRSNDESIGKVTEHLTSCIQQWGDSVLGQRCRDLLLQLYLQRPEVRVPVPEVLLQSEGATSSSICKLDGLVHRFITLLADTSDSRSSESRVADANMACRKLAVAHPVLLLRHLPMIAALLHGRTHLNFQEFRQQNHLAFFLHVLGILELLQPRVFQSEHQGALWDCLRSFIRLLLNYRKSSRHLAPFISKFVQFIHKYVGCSAPAAVAFLQKHAEPLHDLSFDNSDLVMLKSLLAGLSLPSRDGRTDQGLDEEGEDERSAGSLPLVSVSLSTPLTVADVAPHMKRLSRGRAVEDVLETLSDIDEMSRRRPEVLGFFSTNLQRLMSSAEESCRNLAFSLALRSIQNNPSIAADFLPTFMYCLGSRDFEVVQTALRNLPEYTLLCQEHAAVLLHRAFLVGVYGQIDTSAQISEALKILHMEAVM.

Residues 1–86 (MNRAKPTTVR…RPKLSSTPPL (86 aa)) are disordered. The residue at position 13 (Ser13) is a Phosphoserine. The span at 34–45 (GQASESKTTSTL) shows a compositional bias: polar residues. Lys47 is subject to N6-acetyllysine. Positions 62–75 (SASLSGTSALTGLT) are enriched in low complexity. Thr83 is modified (phosphothreonine). The residue at position 87 (Ser87) is a Phosphoserine. A disordered region spans residues 267–297 (LLQGEGARSGGELGAGSSPHPSLTEEEDSQT). Ser307 and Ser926 each carry phosphoserine. The disordered stretch occupies residues 923–947 (STASGEEDDEGESREQKAKKRQRQQ). A helical membrane pass occupies residues 1165 to 1185 (HILVVHAMVILLTLGPPRSGD). The interval 1313 to 1347 (SLPPRRDSTEAPKPESSPEPPPGQGRTRAGTQVPV) is disordered. Positions 1316 to 1325 (PRRDSTEAPK) are enriched in basic and acidic residues. 3 positions are modified to phosphoserine: Ser1320, Ser1328, and Ser1329.

This sequence belongs to the Integrator subunit 1 family. As to quaternary structure, component of the Integrator complex, composed of core subunits INTS1, INTS2, INTS3, INTS4, INTS5, INTS6, INTS7, INTS8, INTS9/RC74, INTS10, INTS11/CPSF3L, INTS12, INTS13, INTS14 and INTS15. The core complex associates with protein phosphatase 2A subunits PPP2CA and PPP2R1A, to form the Integrator-PP2A (INTAC) complex. Interacts with ESRRB, ESRRB is not a core component of the Integrator complex and this association is a bridge for the interaction with the multiprotein complex Integrator; attracts the transcriptional machinery.

The protein resides in the nucleus. The protein localises to the nucleus membrane. Its function is as follows. Component of the integrator complex, a multiprotein complex that terminates RNA polymerase II (Pol II) transcription in the promoter-proximal region of genes. The integrator complex provides a quality checkpoint during transcription elongation by driving premature transcription termination of transcripts that are unfavorably configured for transcriptional elongation: the complex terminates transcription by (1) catalyzing dephosphorylation of the C-terminal domain (CTD) of Pol II subunit POLR2A/RPB1 and SUPT5H/SPT5, (2) degrading the exiting nascent RNA transcript via endonuclease activity and (3) promoting the release of Pol II from bound DNA. The integrator complex is also involved in terminating the synthesis of non-coding Pol II transcripts, such as enhancer RNAs (eRNAs), small nuclear RNAs (snRNAs), telomerase RNAs and long non-coding RNAs (lncRNAs). Within the integrator complex, INTS1 is involved in the post-termination step: INTS1 displaces INTS3 and the SOSS factors, allowing the integrator complex to return to the closed conformation, ready to bind to the paused elongation complex for another termination cycle. Mediates recruitment of cytoplasmic dynein to the nuclear envelope, probably as component of the integrator complex. The sequence is that of Integrator complex subunit 1 from Mus musculus (Mouse).